The sequence spans 201 residues: ATP-dependent Clp protease proteolytic subunit (201 aa).

Ser98 acts as the Nucleophile in catalysis. His123 is an active-site residue.

This sequence belongs to the peptidase S14 family. In terms of assembly, fourteen ClpP subunits assemble into 2 heptameric rings which stack back to back to give a disk-like structure with a central cavity, resembling the structure of eukaryotic proteasomes.

The protein localises to the cytoplasm. It carries out the reaction Hydrolysis of proteins to small peptides in the presence of ATP and magnesium. alpha-casein is the usual test substrate. In the absence of ATP, only oligopeptides shorter than five residues are hydrolyzed (such as succinyl-Leu-Tyr-|-NHMec, and Leu-Tyr-Leu-|-Tyr-Trp, in which cleavage of the -Tyr-|-Leu- and -Tyr-|-Trp bonds also occurs).. In terms of biological role, cleaves peptides in various proteins in a process that requires ATP hydrolysis. Has a chymotrypsin-like activity. Plays a major role in the degradation of misfolded proteins. In Neorickettsia sennetsu (strain ATCC VR-367 / Miyayama) (Ehrlichia sennetsu), this protein is ATP-dependent Clp protease proteolytic subunit.